The chain runs to 476 residues: ATP synthase subunit beta, mitochondrial (476 aa).

Position 156 to 163 (156 to 163) interacts with ATP; it reads GAGVGKTV.

F-type ATP synthases have 2 components, the catalytic core F(1) and the membrane-embedded component F(0), linked together by a central stalk and a peripheral stalk. The central stalk, also called rotor shaft, is often seen as part of F(1). The peripheral stalk is seen as part of F(0). F(0) contains the membrane channel next to the rotor. F-type ATP synthases form dimers but each monomer functions independently in ATP generation. The dimer consists of 18 different polypeptides: ATP1 (subunit alpha, part of F(1), 3 molecules per monomer), ATP2 (subunit beta, part of F(1), 3 molecules per monomer), ATP3 (subunit gamma, part of the central stalk), ATP4 (subunit b, part of the peripheral stalk), ATP5/OSCP (subunit 5/OSCP, part of the peripheral stalk), ATP6 (subunit a, part of the peripheral stalk), ATP7 (subunit d, part of the peripheral stalk), ATP8 (subunit 8, part of the peripheral stalk), OLI1 (subunit c, part of the rotor, 10 molecules per monomer), ATP14 (subunit h, part of the peripheral stalk), ATP15 (subunit epsilon, part of the central stalk), ATP16 (subunit delta, part of the central stalk), ATP17 (subunit f, part of the peripheral stalk), ATP18 (subunit i/j, part of the peripheral stalk). Dimer-specific subunits are ATP19 (subunit k, at interface between monomers), ATP20 (subunit g, at interface between monomers), TIM11 (subunit e, at interface between monomers). Also contains subunit L.

The protein resides in the mitochondrion inner membrane. The enzyme catalyses ATP + H2O + 4 H(+)(in) = ADP + phosphate + 5 H(+)(out). Functionally, mitochondrial membrane ATP synthase (F(1)F(0) ATP synthase or Complex V) produces ATP from ADP in the presence of a proton gradient across the membrane which is generated by electron transport complexes of the respiratory chain. F-type ATP synthases consist of two structural domains, F(1) - containing the extramembraneous catalytic core, and F(0) - containing the membrane proton channel, linked together by a central stalk and a peripheral stalk. During catalysis, ATP synthesis in the catalytic domain of F(1) is coupled via a rotary mechanism of the central stalk subunits to proton translocation. Subunits alpha/ATP1 and beta/ATP2 form the catalytic core in F(1). Rotation of the central stalk against the surrounding alpha/ATP1(3)beta/ATP2(3) subunits leads to hydrolysis of ATP in three separate catalytic sites on the beta/ATP2 subunits. The chain is ATP synthase subunit beta, mitochondrial from Pichia angusta (Yeast).